Consider the following 75-residue polypeptide: Small ribosomal subunit protein bS16c (75 aa).

Belongs to the bacterial ribosomal protein bS16 family.

It localises to the plastid. The protein resides in the chloroplast. In Cyanidioschyzon merolae (strain NIES-3377 / 10D) (Unicellular red alga), this protein is Small ribosomal subunit protein bS16c.